We begin with the raw amino-acid sequence, 388 residues long: Chorismate synthase (388 aa).

Positions 39 and 45 each coordinate NADP(+). FMN contacts are provided by residues Arg-132–Ser-134, Asn-251–Ala-252, Gly-296, Lys-311–Thr-315, and Arg-337.

It belongs to the chorismate synthase family. In terms of assembly, homotetramer. The cofactor is FMNH2.

The enzyme catalyses 5-O-(1-carboxyvinyl)-3-phosphoshikimate = chorismate + phosphate. It participates in metabolic intermediate biosynthesis; chorismate biosynthesis; chorismate from D-erythrose 4-phosphate and phosphoenolpyruvate: step 7/7. In terms of biological role, catalyzes the anti-1,4-elimination of the C-3 phosphate and the C-6 proR hydrogen from 5-enolpyruvylshikimate-3-phosphate (EPSP) to yield chorismate, which is the branch point compound that serves as the starting substrate for the three terminal pathways of aromatic amino acid biosynthesis. This reaction introduces a second double bond into the aromatic ring system. This chain is Chorismate synthase, found in Staphylococcus aureus (strain bovine RF122 / ET3-1).